A 178-amino-acid chain; its full sequence is Large ribosomal subunit protein uL6 (178 aa).

It belongs to the universal ribosomal protein uL6 family. As to quaternary structure, part of the 50S ribosomal subunit.

Functionally, this protein binds to the 23S rRNA, and is important in its secondary structure. It is located near the subunit interface in the base of the L7/L12 stalk, and near the tRNA binding site of the peptidyltransferase center. This chain is Large ribosomal subunit protein uL6, found in Oenococcus oeni (strain ATCC BAA-331 / PSU-1).